The sequence spans 123 residues: Basic myotoxic phospholipase A2 PhTX-II (123 aa).

7 disulfide bridges follow: Cys-26–Cys-116, Cys-28–Cys-45, Cys-44–Cys-95, Cys-50–Cys-123, Cys-51–Cys-88, Cys-58–Cys-81, and Cys-75–Cys-86. Ca(2+) is bound by residues Tyr-27, Gly-29, and Gly-31. The active site involves His-48. Residue Asp-49 participates in Ca(2+) binding. Asp-89 is a catalytic residue.

As to quaternary structure, monomer. It depends on Ca(2+) as a cofactor. In terms of tissue distribution, expressed by the venom gland.

It localises to the secreted. It catalyses the reaction a 1,2-diacyl-sn-glycero-3-phosphocholine + H2O = a 1-acyl-sn-glycero-3-phosphocholine + a fatty acid + H(+). Its activity is regulated as follows. P-bromophenacyl bromide (BPB) completely inhibits the catalytic and edematogenic activities. Enzymatic activity is also diminished by EDTA, heparin and crotapotins F2 and F3 from C.d.collilineatus. Inhibited by divalent cations different from calcium ions (cadmium, magnesium, manganese, zinc), since they act as competitive antagonists of this cofactor. In terms of biological role, snake venom phospholipase A2 (PLA2) that induces myotoxicity and local edema in mice. In addition, it causes neuromuscular blockade in avian neuromuscular preparations with a significant direct action on skeletal muscle function. Myotoxic action is exerted by both enzymatic and non-enzymatic mechanisms. PLA2 catalyzes the calcium-dependent hydrolysis of the 2-acyl groups in 3-sn-phosphoglycerides. This chain is Basic myotoxic phospholipase A2 PhTX-II, found in Bothrocophias hyoprora (Amazonian hognose viper).